The primary structure comprises 496 residues: Aspartyl/glutamyl-tRNA(Asn/Gln) amidotransferase subunit B (496 aa).

It belongs to the GatB/GatE family. GatB subfamily. As to quaternary structure, heterotrimer of A, B and C subunits.

It carries out the reaction L-glutamyl-tRNA(Gln) + L-glutamine + ATP + H2O = L-glutaminyl-tRNA(Gln) + L-glutamate + ADP + phosphate + H(+). It catalyses the reaction L-aspartyl-tRNA(Asn) + L-glutamine + ATP + H2O = L-asparaginyl-tRNA(Asn) + L-glutamate + ADP + phosphate + 2 H(+). Its function is as follows. Allows the formation of correctly charged Asn-tRNA(Asn) or Gln-tRNA(Gln) through the transamidation of misacylated Asp-tRNA(Asn) or Glu-tRNA(Gln) in organisms which lack either or both of asparaginyl-tRNA or glutaminyl-tRNA synthetases. The reaction takes place in the presence of glutamine and ATP through an activated phospho-Asp-tRNA(Asn) or phospho-Glu-tRNA(Gln). This is Aspartyl/glutamyl-tRNA(Asn/Gln) amidotransferase subunit B from Natronomonas pharaonis (strain ATCC 35678 / DSM 2160 / CIP 103997 / JCM 8858 / NBRC 14720 / NCIMB 2260 / Gabara) (Halobacterium pharaonis).